The sequence spans 1481 residues: DNA excision repair protein ERCC-6 (1481 aa).

Positions Met1–Tyr506 are N-terminal domain; essential for its chromatin remodeling activity. Phosphoserine; by CDK2 is present on Ser158. Lys170 carries the post-translational modification N6-methylated lysine; by EHMT2. Lys256 participates in a covalent cross-link: Glycyl lysine isopeptide (Lys-Gly) (interchain with G-Cter in SUMO2). An N6-methylated lysine; by EHMT2 modification is found at Lys298. The disordered stretch occupies residues Ala309–Gly452. Basic residues predominate over residues Arg327–Arg337. The span at Lys353–Ala363 shows a compositional bias: basic and acidic residues. Composition is skewed to acidic residues over residues Asp378 to Gly390 and Glu420 to Ala435. A phosphoserine mark is found at Ser428 and Ser429. Lys444 is modified (N6-methylated lysine; by EHMT2). Ser482 and Ser485 each carry phosphoserine. Residues Trp515–Gly691 form the Helicase ATP-binding domain. Residue Asp528–Thr535 coordinates ATP. The DEAH box signature appears at Asp642 to His645. The Helicase C-terminal domain occupies Val839 to Tyr998. Disordered regions lie at residues Leu1040–Ser1096, Ser1114–Ser1238, and Gly1307–Ser1372. Lys1047 is subject to N6-methylated lysine; by EHMT2. A compositionally biased stretch (polar residues) spans Ala1138 to Ser1147. Positions Gln1192–Lys1201 are enriched in basic residues. Residues His1202–Arg1212 are compositionally biased toward basic and acidic residues. Residues Leu1330–Asn1345 are compositionally biased toward polar residues. The span at Met1346–Gly1364 shows a compositional bias: basic and acidic residues. The CSA-interacting motif (CIM) signature appears at Ser1373–His1385. A ubiquitin-binding domain (UBD) region spans residues Ile1387–Leu1416. The tract at residues Val1417–Cys1481 is winged-helix domain (WHD). An essential for its interaction with RNA polymerase II, transcription-coupled nucleotide excision repair activity, association with chromatin after UV irradiation and for mediating the UV-induced translocation of ERRC8 to the nuclear matrix region spans residues Ser1434 to Cys1481.

The protein belongs to the SNF2/RAD54 helicase family. Homodimer. Binds DNA. Interacts with ERCC8. Interacts with RNA polymerase II; interaction is enhanced by UV irradiation. Component of the B-WICH complex, at least composed of SMARCA5/SNF2H, BAZ1B/WSTF, SF3B1, DEK, MYO1C, ERCC6, MYBBP1A and DDX21. Interacts with KIAA1530/UVSSA. Interacts with ELOA and CUL5; the interaction is induced by DNA damaging agents or by inhibitors of RNA polymerase II elongation. Interacts (via WHD region) with RIF1. Interacts with SMARCC2/BAF170, SMARCB1/BAF47 and the neuron-specific chromatin remodeling complex (nBAF complex). Interacts with ERCC5/XPG (via C-terminus); the interaction stimulates ERCC6/CSB binding to DNA repair bubble and ERCC6/CSB ATPase activity. May form a complex composed of RNA polymerase II, ERCC6/CSB and ERCC5/XPG which associates with the DNA repair bubble during transcription-coupled nucleotide excision repair. Interacts with CAND1, CSTF1, DDX3X, DDX5, DDX17, DDX23, DHX36, HDAC1, HNRNPU, MTA2, PRPF3, PSMD3, RBBP4, SFPQ, SMARCA1, SMARCA2, TOP1, USP7 and XRCC5. Post-translationally, phosphorylated in a cell cycle-dependent manner at Ser-158 by cyclin A-CDK2 in response to DNA damage. Phosphorylation at this site promotes the intramolecular interaction of the N-terminal domain with the helicase ATP-binding domain, thereby probably releasing the inhibitory effect of the N-terminal domain on its ATPase activity. Phosphorylation is essential for its chromatin remodeling activity. Ubiquitinated at the C-terminus. Ubiquitination by the CSA complex leads to ERCC6 proteasomal degradation in a UV-dependent manner. Stabilized following interaction with KIAA1530/UVSSA, which promotes recruitment of deubiquitinating enzyme USP7, leading to deubiquitination of ERCC6 thereby preventing UV-induced degradation of ERCC6 by the proteasome.

The protein resides in the nucleus. The protein localises to the chromosome. It catalyses the reaction ATP + H2O = ADP + phosphate + H(+). In terms of biological role, essential factor involved in transcription-coupled nucleotide excision repair (TC-NER), a process during which RNA polymerase II-blocking lesions are rapidly removed from the transcribed strand of active genes. Plays a central role in the initiation of the TC-NER process: specifically recognizes and binds RNA polymerase II stalled at a lesion, and mediates recruitment of ERCC8/CSA, initiating DNA damage excision by TFIIH recruitment. Upon DNA-binding, it locally modifies DNA conformation by wrapping the DNA around itself, thereby modifying the interface between stalled RNA polymerase II and DNA. Acts as a chromatin remodeler at DSBs; DNA-dependent ATPase-dependent activity is essential for this function. Plays an important role in regulating the choice of the DNA double-strand breaks (DSBs) repair pathway and G2/M checkpoint activation; DNA-dependent ATPase activity is essential for this function. Regulates the DNA repair pathway choice by inhibiting non-homologous end joining (NHEJ), thereby promoting the homologous recombination (HR)-mediated repair of DSBs during the S/G2 phases of the cell cycle. Mediates the activation of the ATM- and CHEK2-dependent DNA damage responses thus preventing premature entry of cells into mitosis following the induction of DNA DSBs. Remodels chromatin by evicting histones from chromatin flanking DSBs, limiting RIF1 accumulation at DSBs thereby promoting BRCA1-mediated HR. Required for stable recruitment of ELOA and CUL5 to DNA damage sites. Also involved in UV-induced translocation of ERCC8 to the nuclear matrix. Essential for neuronal differentiation and neuritogenesis; regulates transcription and chromatin remodeling activities required during neurogenesis. The sequence is that of DNA excision repair protein ERCC-6 (Ercc6) from Mus musculus (Mouse).